Consider the following 282-residue polypeptide: Bifunctional protein FolD (282 aa).

Residues 165 to 167 (NRS), Ser190, and Ile231 contribute to the NADP(+) site.

The protein belongs to the tetrahydrofolate dehydrogenase/cyclohydrolase family. Homodimer.

The enzyme catalyses (6R)-5,10-methylene-5,6,7,8-tetrahydrofolate + NADP(+) = (6R)-5,10-methenyltetrahydrofolate + NADPH. It catalyses the reaction (6R)-5,10-methenyltetrahydrofolate + H2O = (6R)-10-formyltetrahydrofolate + H(+). Its pathway is one-carbon metabolism; tetrahydrofolate interconversion. Its function is as follows. Catalyzes the oxidation of 5,10-methylenetetrahydrofolate to 5,10-methenyltetrahydrofolate and then the hydrolysis of 5,10-methenyltetrahydrofolate to 10-formyltetrahydrofolate. The chain is Bifunctional protein FolD from Clostridium botulinum (strain 657 / Type Ba4).